Here is a 633-residue protein sequence, read N- to C-terminus: MLRRGYKASERRRHLSERLSWHQDQALSSSIYLLREMGPTGFLLREEEPEYMDFRVFLGNPHVCNCSTFPKGGELCKHICWVLLKKFKLPRNHESALQLGLGEREISDLLRGIHRVQTPQPGTNDENEHVEEDGYIKQKEIDSEDICSICQELLLEKKLPVTFCRFGCGNSIHIKCMKILANYQSTSNTSMLKCPLCRKEFAPLKLILEEFKNSSKLVAAAEKERLDKHLGIPCNNCKQFPIEGKCYKCTECIEYHLCQECFDSCCHLSHTFTFREKRNQKWRSLEKRADEVVKYIDTKNEIEEKMSHFQEKQGQVYTPKHIVRSLPLQLITKNSKLLAPGYQCLLCLKAFHLGQHTRLLPCTHKFHRKCIDNWLFHKCNSCPIDGQVIYNPLTWKNSAVNGQAHQSVSNRDIIHLSKQKEPDLFIPGTGLVLKQNRLGILPSIPQCNFDELNTPQSPKDAYENTTIDNLCSIKLDNSNSKKLTYDYKISQHFPRYLQDLPTVSFGKIPSQTLLPPIVHKNIVCPTAMESPCISGKFHTSLSRMTKGCKCNNHNLKKTPATKIREDNKRSTLLPEDFNLIVNWSTAKLSLSKRYSNCMGEITRKCSHLSRQPVSHSVNTKSTELSLIIEGVQL.

An SWIM-type zinc finger spans residues 54 to 87 (FRVFLGNPHVCNCSTFPKGGELCKHICWVLLKKF). The RING-type 1 zinc-finger motif lies at 147-198 (CSICQELLLEKKLPVTFCRFGCGNSIHIKCMKILANYQSTSNTSMLKCPLCR). The ZZ-type zinc finger occupies 229 to 280 (HLGIPCNNCKQFPIEGKCYKCTECIEYHLCQECFDSCCHLSHTFTFREKRNQ). Zn(2+) contacts are provided by Cys-234, Cys-237, Cys-249, Cys-252, Cys-258, Cys-261, His-267, and His-270. The RING-type 2 zinc-finger motif lies at 344-388 (CLLCLKAFHLGQHTRLLPCTHKFHRKCIDNWLFHKCNSCPIDGQV).

In terms of assembly, dimer. Interacts with UBE2D1. Post-translationally, polyubiquitinated. Polyubiquitination is followed by degradation via the proteasome. Expression is testis-specific.

It catalyses the reaction S-ubiquitinyl-[E2 ubiquitin-conjugating enzyme]-L-cysteine + [acceptor protein]-L-lysine = [E2 ubiquitin-conjugating enzyme]-L-cysteine + N(6)-ubiquitinyl-[acceptor protein]-L-lysine.. Its function is as follows. E3 ubiquitin-protein ligase involved in the regulation of Fas-, DR3- and DR4-mediated apoptosis. Functions in conjunction with the UBE2D1, UBE2D3 and UBE2E1 E2 ubiquitin-conjugating enzymes. The polypeptide is E3 ubiquitin-protein ligase ZSWIM2 (Homo sapiens (Human)).